The primary structure comprises 301 residues: tRNA pseudouridine synthase B (301 aa).

Asp38 functions as the Nucleophile in the catalytic mechanism.

Belongs to the pseudouridine synthase TruB family. Type 1 subfamily.

The enzyme catalyses uridine(55) in tRNA = pseudouridine(55) in tRNA. In terms of biological role, responsible for synthesis of pseudouridine from uracil-55 in the psi GC loop of transfer RNAs. The polypeptide is tRNA pseudouridine synthase B (Lacticaseibacillus paracasei (strain ATCC 334 / BCRC 17002 / CCUG 31169 / CIP 107868 / KCTC 3260 / NRRL B-441) (Lactobacillus paracasei)).